The sequence spans 341 residues: S-adenosylmethionine:tRNA ribosyltransferase-isomerase (341 aa).

This sequence belongs to the QueA family. Monomer.

Its subcellular location is the cytoplasm. It catalyses the reaction 7-aminomethyl-7-carbaguanosine(34) in tRNA + S-adenosyl-L-methionine = epoxyqueuosine(34) in tRNA + adenine + L-methionine + 2 H(+). The protein operates within tRNA modification; tRNA-queuosine biosynthesis. In terms of biological role, transfers and isomerizes the ribose moiety from AdoMet to the 7-aminomethyl group of 7-deazaguanine (preQ1-tRNA) to give epoxyqueuosine (oQ-tRNA). In Pelodictyon phaeoclathratiforme (strain DSM 5477 / BU-1), this protein is S-adenosylmethionine:tRNA ribosyltransferase-isomerase.